The sequence spans 268 residues: 4-hydroxy-tetrahydrodipicolinate reductase (268 aa).

NAD(+) contacts are provided by residues 10–15 (GASGRM) and Asp-36. An NADP(+)-binding site is contributed by Arg-37. NAD(+) is bound by residues 99–101 (GTT) and 123–126 (SANM). His-156 serves as the catalytic Proton donor/acceptor. A (S)-2,3,4,5-tetrahydrodipicolinate-binding site is contributed by His-157. Lys-160 (proton donor) is an active-site residue. 166–167 (GT) contributes to the (S)-2,3,4,5-tetrahydrodipicolinate binding site.

It belongs to the DapB family.

The protein resides in the cytoplasm. It catalyses the reaction (S)-2,3,4,5-tetrahydrodipicolinate + NAD(+) + H2O = (2S,4S)-4-hydroxy-2,3,4,5-tetrahydrodipicolinate + NADH + H(+). It carries out the reaction (S)-2,3,4,5-tetrahydrodipicolinate + NADP(+) + H2O = (2S,4S)-4-hydroxy-2,3,4,5-tetrahydrodipicolinate + NADPH + H(+). The protein operates within amino-acid biosynthesis; L-lysine biosynthesis via DAP pathway; (S)-tetrahydrodipicolinate from L-aspartate: step 4/4. Functionally, catalyzes the conversion of 4-hydroxy-tetrahydrodipicolinate (HTPA) to tetrahydrodipicolinate. The chain is 4-hydroxy-tetrahydrodipicolinate reductase from Burkholderia mallei (strain NCTC 10247).